The primary structure comprises 371 residues: Opsin Rh1 (371 aa).

The Extracellular portion of the chain corresponds to Met-1–Trp-47. A glycan (N-linked (GlcNAc...) asparagine) is linked at Asn-18. A helical membrane pass occupies residues Ala-48 to Ile-72. Residues Phe-73–Asn-84 are Cytoplasmic-facing. Residues Leu-85–Phe-110 traverse the membrane as a helical segment. Residues Tyr-111–Tyr-124 are Extracellular-facing. A disulfide bridge links Cys-121 with Cys-198. Residues Gly-125 to Leu-144 traverse the membrane as a helical segment. Residues Asp-145–Leu-163 are Cytoplasmic-facing. The helical transmembrane segment at Ala-164–Ser-187 threads the bilayer. The Extracellular segment spans residues Arg-188–Ser-211. A helical membrane pass occupies residues Tyr-212–Val-239. Over Ser-240–Lys-274 the chain is Cytoplasmic. The helical transmembrane segment at Val-275–Leu-298 threads the bilayer. Topologically, residues Phe-299–Thr-305 are extracellular. A helical transmembrane segment spans residues Pro-306 to Ser-330. Lys-317 bears the N6-(retinylidene)lysine mark. Over His-331 to Ala-371 the chain is Cytoplasmic.

This sequence belongs to the G-protein coupled receptor 1 family. Opsin subfamily. Phosphorylated on some or all of the serine and threonine residues present in the C-terminal region.

The protein localises to the cell projection. Its subcellular location is the rhabdomere membrane. Visual pigments are the light-absorbing molecules that mediate vision. They consist of an apoprotein, opsin, covalently linked to cis-retinal. This Calliphora vicina (Blue blowfly) protein is Opsin Rh1 (NINAE).